We begin with the raw amino-acid sequence, 297 residues long: Small ribosomal subunit protein uS2 (297 aa).

Residues 266 to 297 are disordered; the sequence is GASWDAAEPSDWAATPAAAGQEWAASGATEQW. A compositionally biased stretch (low complexity) spans 282 to 297; sequence AAAGQEWAASGATEQW.

This sequence belongs to the universal ribosomal protein uS2 family. Component of the small ribosomal subunit. Mature ribosomes consist of a small (40S) and a large (60S) subunit. The 40S subunit contains about 33 different proteins and 1 molecule of RNA (18S). The 60S subunit contains about 49 different proteins and 3 molecules of RNA (25S, 5.8S and 5S). Interacts with rps21.

The protein resides in the cytoplasm. Functionally, required for the assembly and/or stability of the 40S ribosomal subunit. Required for the processing of the 20S rRNA-precursor to mature 18S rRNA in a late step of the maturation of 40S ribosomal subunits. The chain is Small ribosomal subunit protein uS2 (rps0) from Sclerotinia sclerotiorum (strain ATCC 18683 / 1980 / Ss-1) (White mold).